A 312-amino-acid chain; its full sequence is Very-long-chain 3-oxoacyl-CoA reductase (312 aa).

Residues 4-24 form a helical membrane-spanning segment; it reads ALPAAGFLYWVGASTVAYLAL. 50-79 serves as a coordination point for NADP(+); the sequence is GEWAVVTGGTDGIGKSYAEELAKRGMKIVL. 2 consecutive transmembrane segments (helical) span residues 182-202 and 271-291; these read GAIL…LTIY and GYPI…WLYF. Serine 189 is a binding site for substrate. The Proton acceptor role is filled by tyrosine 202. A Di-lysine motif motif is present at residues 308 to 312; it reads KMKMN.

This sequence belongs to the short-chain dehydrogenases/reductases (SDR) family. 17-beta-HSD 3 subfamily.

It localises to the endoplasmic reticulum membrane. The enzyme catalyses a very-long-chain (3R)-3-hydroxyacyl-CoA + NADP(+) = a very-long-chain 3-oxoacyl-CoA + NADPH + H(+). It carries out the reaction 17beta-estradiol + NAD(+) = estrone + NADH + H(+). The catalysed reaction is 17beta-estradiol + NADP(+) = estrone + NADPH + H(+). It catalyses the reaction 3-oxooctadecanoyl-CoA + NADPH + H(+) = (3R)-hydroxyoctadecanoyl-CoA + NADP(+). The enzyme catalyses (7Z,10Z,13Z,16Z)-3-oxodocosatetraenoyl-CoA + NADPH + H(+) = (3R)-hydroxy-(7Z,10Z,13Z,16Z)-docosatetraenoyl-CoA + NADP(+). It carries out the reaction 3-oxo-(7Z,10Z,13Z,16Z,19Z)-docosapentaenoyl-CoA + NADPH + H(+) = (3R)-hydroxy-(7Z,10Z,13Z,16Z,19Z)-docosapentaenoyl-CoA + NADP(+). The catalysed reaction is (8Z,11Z,14Z)-3-oxoeicosatrienoyl-CoA + NADPH + H(+) = (3R)-hydroxy-(8Z,11Z,14Z)-eicosatrienoyl-CoA + NADP(+). The protein operates within lipid metabolism; fatty acid biosynthesis. It participates in steroid biosynthesis; estrogen biosynthesis. Functionally, catalyzes the second of the four reactions of the long-chain fatty acids elongation cycle. This endoplasmic reticulum-bound enzymatic process, allows the addition of two carbons to the chain of long- and very long-chain fatty acids/VLCFAs per cycle. This enzyme has a 3-ketoacyl-CoA reductase activity, reducing 3-ketoacyl-CoA to 3-hydroxyacyl-CoA, within each cycle of fatty acid elongation. Thereby, it may participate in the production of VLCFAs of different chain lengths that are involved in multiple biological processes as precursors of membrane lipids and lipid mediators. May also catalyze the transformation of estrone (E1) into estradiol (E2) and play a role in estrogen formation. The chain is Very-long-chain 3-oxoacyl-CoA reductase (HSD17B12) from Bos taurus (Bovine).